Reading from the N-terminus, the 679-residue chain is Enzymatic polyprotein (679 aa).

The interval 40–130 is protease; that stretch reads LHCFVDTGAS…LYEPFIQFTD (91 aa). Aspartate 45 is a catalytic residue. A Reverse transcriptase domain is found at 272-452; the sequence is LKVIKPSKSP…KKINFLGLEI (181 aa).

It belongs to the caulimoviridae enzymatic polyprotein family.

The enzyme catalyses DNA(n) + a 2'-deoxyribonucleoside 5'-triphosphate = DNA(n+1) + diphosphate. In terms of biological role, encodes for at least two polypeptides: protease (PR) and reverse transcriptase (RT). The protease processes the polyprotein in cis. Reverse transcriptase is multifunctional enzyme that converts the viral RNA genome into dsDNA in viral cytoplasmic capsids. This enzyme displays a DNA polymerase activity that can copy either DNA or RNA templates, and a ribonuclease H (RNase H) activity that cleaves the RNA strand of RNA-DNA heteroduplexes in a partially processive 3'- to 5'-endonucleasic mode. Neo-synthesized pregenomic RNA (pgRNA) are encapsidated, and reverse-transcribed inside the nucleocapsid. Partial (+)DNA is synthesized from the (-)DNA template and generates the relaxed circular DNA (RC-DNA) genome. After budding and infection, the RC-DNA migrates in the nucleus, and is converted into a plasmid-like covalently closed circular DNA (cccDNA). The sequence is that of Enzymatic polyprotein from Cauliflower mosaic virus (strain BBC) (CaMV).